Reading from the N-terminus, the 516-residue chain is Signal recognition particle protein (516 aa).

GTP is bound by residues 108 to 115, 191 to 195, and 249 to 252; these read GLQGAGKT, DTAGR, and TKID. The tract at residues 383–405 is disordered; it reads MTPEERENPDLLTPSRRRRIASG.

This sequence belongs to the GTP-binding SRP family. SRP54 subfamily. In terms of assembly, part of the signal recognition particle protein translocation system, which is composed of SRP and FtsY.

It localises to the cytoplasm. The enzyme catalyses GTP + H2O = GDP + phosphate + H(+). Functionally, involved in targeting and insertion of nascent membrane proteins into the cytoplasmic membrane. Binds to the hydrophobic signal sequence of the ribosome-nascent chain (RNC) as it emerges from the ribosomes. The SRP-RNC complex is then targeted to the cytoplasmic membrane where it interacts with the SRP receptor FtsY. The protein is Signal recognition particle protein of Streptococcus mutans serotype c (strain ATCC 700610 / UA159).